The following is a 467-amino-acid chain: Coiled-coil domain-containing protein 71 (467 aa).

The tract at residues 81-105 is disordered; the sequence is PSQTKLQARAPNPTATSPPASAPRT. Residues 88-105 are compositionally biased toward low complexity; sequence ARAPNPTATSPPASAPRT. Ser129 carries the post-translational modification Phosphoserine. Disordered regions lie at residues 211-280 and 349-416; these read KLRK…GTKT and VRAK…KAWL. The span at 253 to 265 shows a compositional bias: polar residues; it reads GHQSKTNRATGSP. Positions 279 to 359 form a coiled coil; the sequence is KTAQAKVART…RAKAKVARTQ (81 aa). Positions 349 to 380 are enriched in basic residues; it reads VRAKAKVARTQPRGRGRPKGSAKARTTRKGQK. Positions 392-401 are enriched in basic and acidic residues; the sequence is RAEEAKDLPP.

This chain is Coiled-coil domain-containing protein 71 (CCDC71), found in Homo sapiens (Human).